A 323-amino-acid chain; its full sequence is tRNA dimethylallyltransferase (323 aa).

12–19 is a binding site for ATP; sequence GPTAAGKT. A substrate-binding site is contributed by 14 to 19; that stretch reads TAAGKT. Interaction with substrate tRNA stretches follow at residues 37–40 and 161–165; these read DSAL and QRLTR.

It belongs to the IPP transferase family. Monomer. It depends on Mg(2+) as a cofactor.

The enzyme catalyses adenosine(37) in tRNA + dimethylallyl diphosphate = N(6)-dimethylallyladenosine(37) in tRNA + diphosphate. In terms of biological role, catalyzes the transfer of a dimethylallyl group onto the adenine at position 37 in tRNAs that read codons beginning with uridine, leading to the formation of N6-(dimethylallyl)adenosine (i(6)A). This chain is tRNA dimethylallyltransferase, found in Pseudomonas fluorescens (strain ATCC BAA-477 / NRRL B-23932 / Pf-5).